The primary structure comprises 167 residues: SsrA-binding protein (167 aa).

Residues 139–158 (QNHDKRDAAKERDWQRDKQR) show a composition bias toward basic and acidic residues. The tract at residues 139-167 (QNHDKRDAAKERDWQRDKQRVMRRHNRDA) is disordered.

The protein belongs to the SmpB family.

The protein resides in the cytoplasm. Functionally, required for rescue of stalled ribosomes mediated by trans-translation. Binds to transfer-messenger RNA (tmRNA), required for stable association of tmRNA with ribosomes. tmRNA and SmpB together mimic tRNA shape, replacing the anticodon stem-loop with SmpB. tmRNA is encoded by the ssrA gene; the 2 termini fold to resemble tRNA(Ala) and it encodes a 'tag peptide', a short internal open reading frame. During trans-translation Ala-aminoacylated tmRNA acts like a tRNA, entering the A-site of stalled ribosomes, displacing the stalled mRNA. The ribosome then switches to translate the ORF on the tmRNA; the nascent peptide is terminated with the 'tag peptide' encoded by the tmRNA and targeted for degradation. The ribosome is freed to recommence translation, which seems to be the essential function of trans-translation. The protein is SsrA-binding protein of Xanthomonas oryzae pv. oryzae (strain PXO99A).